A 481-amino-acid polypeptide reads, in one-letter code: U6 small nuclear RNA (adenine-(43)-N(6))-methyltransferase (481 aa).

S-adenosyl-L-methionine-binding residues include K82, G108, D131, T164, and N184.

Belongs to the methyltransferase superfamily. METTL16/RlmF family. As to quaternary structure, self-associates. Interacts with dlc-1; the interaction is direct, and is required for nuclear localization of mett-10.

It localises to the nucleus. It carries out the reaction an adenosine in mRNA + S-adenosyl-L-methionine = an N(6)-methyladenosine in mRNA + S-adenosyl-L-homocysteine + H(+). It catalyses the reaction adenosine in U6 snRNA + S-adenosyl-L-methionine = N(6)-methyladenosine in U6 snRNA + S-adenosyl-L-homocysteine + H(+). RNA N6-methyltransferase that methylates adenosine residues at the N(6) position of a subset of RNAs and is involved in S-adenosyl-L-methionine homeostasis by regulating splicing of S-adenosylmethionine synthase transcripts (sams-3, sams-4 and sams-5). Able to N6-methylate a subset of mRNAs containing the 5'UACAGAAAC-3' nonamer sequence. Plays a key role in S-adenosyl-L-methionine homeostasis: under rich-diet conditions, catalyzes N6-methylation of S-adenosylmethionine synthase mRNAs (sams-3, sams-4 and sams-5), directly inhibiting splicing and protein production of S-adenosylmethionine synthase. In addition to mRNAs, also able to mediate N6-methylation of U6 small nuclear RNA (U6 snRNA). Required for gamete production, inhibiting germ cell proliferative fate and ensuring germ cell meiotic development. Also promotes progression of the mitotic cell cycle in those germ cells that continue to proliferate. Plays a role in the development of the vulva, somatic gonad and embryo. The chain is U6 small nuclear RNA (adenine-(43)-N(6))-methyltransferase from Caenorhabditis briggsae.